A 433-amino-acid polypeptide reads, in one-letter code: Serine--tRNA ligase (433 aa).

235–237 (TSE) serves as a coordination point for L-serine. 266 to 268 (RSE) provides a ligand contact to ATP. Glu289 provides a ligand contact to L-serine. 353–356 (EISS) is an ATP binding site. An L-serine-binding site is contributed by Ser388.

This sequence belongs to the class-II aminoacyl-tRNA synthetase family. Type-1 seryl-tRNA synthetase subfamily. In terms of assembly, homodimer. The tRNA molecule binds across the dimer.

It localises to the cytoplasm. The catalysed reaction is tRNA(Ser) + L-serine + ATP = L-seryl-tRNA(Ser) + AMP + diphosphate + H(+). The enzyme catalyses tRNA(Sec) + L-serine + ATP = L-seryl-tRNA(Sec) + AMP + diphosphate + H(+). The protein operates within aminoacyl-tRNA biosynthesis; selenocysteinyl-tRNA(Sec) biosynthesis; L-seryl-tRNA(Sec) from L-serine and tRNA(Sec): step 1/1. Catalyzes the attachment of serine to tRNA(Ser). Is also able to aminoacylate tRNA(Sec) with serine, to form the misacylated tRNA L-seryl-tRNA(Sec), which will be further converted into selenocysteinyl-tRNA(Sec). This is Serine--tRNA ligase from Burkholderia thailandensis (strain ATCC 700388 / DSM 13276 / CCUG 48851 / CIP 106301 / E264).